The chain runs to 350 residues: Guanine nucleotide-binding protein G(t) subunit alpha-1 (350 aa).

A disordered region spans residues 1–21 (MGAGASAEEKHSRELEKKLKE). Gly2 is lipidated: N-myristoyl glycine. A compositionally biased stretch (basic and acidic residues) spans 7–21 (AEEKHSRELEKKLKE). The G-alpha domain occupies 28 to 350 (RTVKLLLLGA…KENLKDCGLF (323 aa)). Residues 31–44 (KLLLLGAGESGKST) form a G1 motif region. 36–43 (GAGESGKS) contacts GTP. A Mg(2+)-binding site is contributed by Ser43. Tyr142 is modified (phosphotyrosine). GTP is bound by residues Asp146, 171–177 (LRSRVKT), Gly199, 265–268 (NKKD), and Ala322. Positions 169–177 (DVLRSRVKT) are G2 motif. Position 177 (Thr177) interacts with Mg(2+). The G3 motif stretch occupies residues 192-201 (FRMFDVGGQR). Residues 261–268 (VLFLNKKD) are G4 motif. Residues 320 to 325 (TCATDT) form a G5 motif region. An interaction with RHO region spans residues 340 to 350 (IKENLKDCGLF).

The protein belongs to the G-alpha family. G(i/o/t/z) subfamily. In terms of assembly, heterotrimeric G proteins are composed of 3 subunits alpha, beta and gamma. The alpha chain contains the guanine nucleotide binding site. Interacts with RHO. Interacts with RGS9 and PDE6G. Interacts (when myristoylated) with UNC119; interaction is required for localization in sensory neurons. In terms of tissue distribution, in the retina, expressed in the rod photoreceptors.

It localises to the cell projection. The protein localises to the cilium. Its subcellular location is the photoreceptor outer segment. The protein resides in the membrane. It is found in the photoreceptor inner segment. Functions as a signal transducer for the rod photoreceptor RHO. Required for normal RHO-mediated light perception by the retina. Guanine nucleotide-binding proteins (G proteins) function as transducers downstream of G protein-coupled receptors (GPCRs), such as the photoreceptor RHO. The alpha chain contains the guanine nucleotide binding site and alternates between an active, GTP-bound state and an inactive, GDP-bound state. Activated RHO promotes GDP release and GTP binding. Signaling is mediated via downstream effector proteins, such as cGMP-phosphodiesterase. The chain is Guanine nucleotide-binding protein G(t) subunit alpha-1 (Gnat1) from Mus musculus (Mouse).